Reading from the N-terminus, the 306-residue chain is D-alanine--D-alanine ligase (306 aa).

The ATP-grasp domain occupies 101–303 (KLVWQALGLP…FSQLVARILM (203 aa)). 134–189 (VAKLGLPLIVKPSHEGSSVGMSKVDHASELQKALVEAFQHDSDVLIEKWLSGPEFT) serves as a coordination point for ATP. D257, E270, and N272 together coordinate Mg(2+).

It belongs to the D-alanine--D-alanine ligase family. Mg(2+) serves as cofactor. Mn(2+) is required as a cofactor.

The protein localises to the cytoplasm. The enzyme catalyses 2 D-alanine + ATP = D-alanyl-D-alanine + ADP + phosphate + H(+). The protein operates within cell wall biogenesis; peptidoglycan biosynthesis. In terms of biological role, cell wall formation. In Yersinia pseudotuberculosis serotype O:1b (strain IP 31758), this protein is D-alanine--D-alanine ligase.